Reading from the N-terminus, the 163-residue chain is ATP synthase subunit delta, chloroplastic (163 aa).

This sequence belongs to the ATPase delta chain family. In terms of assembly, F-type ATPases have 2 components, F(1) - the catalytic core - and F(0) - the membrane proton channel. F(1) has five subunits: alpha(3), beta(3), gamma(1), delta(1), epsilon(1). CF(0) has four main subunits: a(1), b(1), b'(1) and c(10-14). The alpha and beta chains form an alternating ring which encloses part of the gamma chain. F(1) is attached to F(0) by a central stalk formed by the gamma and epsilon chains, while a peripheral stalk is formed by the delta, b and b' chains.

The protein localises to the plastid. The protein resides in the chloroplast thylakoid membrane. Its function is as follows. F(1)F(0) ATP synthase produces ATP from ADP in the presence of a proton or sodium gradient. F-type ATPases consist of two structural domains, F(1) containing the extramembraneous catalytic core and F(0) containing the membrane proton channel, linked together by a central stalk and a peripheral stalk. During catalysis, ATP synthesis in the catalytic domain of F(1) is coupled via a rotary mechanism of the central stalk subunits to proton translocation. In terms of biological role, this protein is part of the stalk that links CF(0) to CF(1). It either transmits conformational changes from CF(0) to CF(1) or is implicated in proton conduction. This Cyanidioschyzon merolae (strain NIES-3377 / 10D) (Unicellular red alga) protein is ATP synthase subunit delta, chloroplastic.